Consider the following 318-residue polypeptide: Methionyl-tRNA formyltransferase (318 aa).

112–115 (SILP) is a (6S)-5,6,7,8-tetrahydrofolate binding site.

It belongs to the Fmt family.

It carries out the reaction L-methionyl-tRNA(fMet) + (6R)-10-formyltetrahydrofolate = N-formyl-L-methionyl-tRNA(fMet) + (6S)-5,6,7,8-tetrahydrofolate + H(+). Its function is as follows. Attaches a formyl group to the free amino group of methionyl-tRNA(fMet). The formyl group appears to play a dual role in the initiator identity of N-formylmethionyl-tRNA by promoting its recognition by IF2 and preventing the misappropriation of this tRNA by the elongation apparatus. The sequence is that of Methionyl-tRNA formyltransferase from Shewanella baltica (strain OS155 / ATCC BAA-1091).